We begin with the raw amino-acid sequence, 4062 residues long: Transcription-associated protein 1 (4062 aa).

The disordered stretch occupies residues 531–562; that stretch reads LASEPSTSEDADESGGDPNKLPPPTKEGKKTS. 2 TPR repeats span residues 1346–1379 and 1677–1714; these read LDGVQNYMFNCPDGFDFEKDMDMYKRYLSHLLDI and RRSFIRRIIVYQSSGPLRQEFMDTPEYFEKLIDLDDEE. The span at 2659 to 2670 shows a compositional bias: basic and acidic residues; that stretch reads VETEMKREEPEP. Residues 2659 to 2692 are disordered; it reads VETEMKREEPEPMEVDEKDSQDDSKDAGEPKEKE. A compositionally biased stretch (acidic residues) spans 2671–2680; sequence MEVDEKDSQD. Basic and acidic residues predominate over residues 2681-2692; the sequence is DSKDAGEPKEKE. One can recognise an FAT domain in the interval 2800 to 3411; that stretch reads LIEFISSKHE…FYHIREAVSV (612 aa). The stretch at 2847 to 2880 is one TPR 3 repeat; the sequence is IETLESLGTLYNEISEFDQFAAIWERRAVFPDTM. Residues 3682–4046 form the PI3K/PI4K catalytic domain; that stretch reads EPNFEIVIKG…DCVSLISRAK (365 aa). The tract at residues 3688–3694 is G-loop; the sequence is VIKGGQV. The segment at 3902–3910 is catalytic loop; the sequence is NLTPMGPDQ. The tract at residues 3922-3950 is activation loop; that stretch reads NPSYRFEIRGGRSLHDIQHFGHEVPFRLT. The 32-residue stretch at 4031–4062 folds into the FATC domain; that stretch reads AKLRKDDCVSLISRAKDSDNLARMPPTYHAWF.

The protein belongs to the PI3/PI4-kinase family. TRA1 subfamily. In terms of assembly, interacts with histone acetyltransferase Tip60 homolog mys-1. Probably a component of a complex with histone acetyltransferase (HAT) activity, at least composed of mys-1 and trr-1. Expressed in germ cells and somatic cells.

It is found in the nucleus. The protein localises to the chromosome. In terms of biological role, influences germ cell fate in hermaphrodites. Acts downstream of tra-2 and tra-3 and through the Tip60 histone acetyltransferase complex to regulate germ cell fate decisions. Required for spermatogenesis and embryonic development. Acts with tra-2 to promote expression of fog-3 and control male tail development. Involved in the negative regulation of vulval development. Involved in the positive regulation of transcription factor daf-16, probably acting by histone acetylation; thereby modulating stress resistance. Plays a role in acetylation of nucleosomal histone H4, probably acting as a component of the Tip60 histone acetyltransferase complex. The protein is Transcription-associated protein 1 of Caenorhabditis elegans.